The primary structure comprises 172 residues: 3-hydroxydecanoyl-[acyl-carrier-protein] dehydratase (172 aa).

His-71 is an active-site residue.

It belongs to the thioester dehydratase family. FabA subfamily. In terms of assembly, homodimer.

It is found in the cytoplasm. The enzyme catalyses a (3R)-hydroxyacyl-[ACP] = a (2E)-enoyl-[ACP] + H2O. It catalyses the reaction (3R)-hydroxydecanoyl-[ACP] = (2E)-decenoyl-[ACP] + H2O. It carries out the reaction (2E)-decenoyl-[ACP] = (3Z)-decenoyl-[ACP]. Its pathway is lipid metabolism; fatty acid biosynthesis. Functionally, necessary for the introduction of cis unsaturation into fatty acids. Catalyzes the dehydration of (3R)-3-hydroxydecanoyl-ACP to E-(2)-decenoyl-ACP and then its isomerization to Z-(3)-decenoyl-ACP. Can catalyze the dehydratase reaction for beta-hydroxyacyl-ACPs with saturated chain lengths up to 16:0, being most active on intermediate chain length. The chain is 3-hydroxydecanoyl-[acyl-carrier-protein] dehydratase from Aliivibrio salmonicida (strain LFI1238) (Vibrio salmonicida (strain LFI1238)).